The chain runs to 373 residues: Protein translocase subunit SecF (373 aa).

6 helical membrane passes run 26–46, 142–162, 166–186, 193–213, 251–271, and 280–300; these read IWYGISILITITAIVGLAVRG, WQGLGIFMVLVVIYLAIAFEW, LAAFVALIHDITITVGIYALV, GTVIGLLTILGYSLYDTVVVF, VVALLPVAGLLFIGGGVLGAG, and LFVGLAAGAYSSIFIATPLVA. Over residues 322 to 332 the composition is skewed to low complexity; that stretch reads QGAAKGESAES. Residues 322–373 are disordered; it reads QGAAKGESAESAADEGAYDADEPDDAAPAVVGPRNQPASRGRGRGRPSGKRR. Over residues 333-346 the composition is skewed to acidic residues; it reads AADEGAYDADEPDD. The segment covering 362 to 373 has biased composition (basic residues); sequence GRGRGRPSGKRR.

Belongs to the SecD/SecF family. SecF subfamily. In terms of assembly, forms a complex with SecD. Part of the essential Sec protein translocation apparatus which comprises SecA, SecYEG and auxiliary proteins SecDF. Other proteins may also be involved.

The protein localises to the cell membrane. Part of the Sec protein translocase complex. Interacts with the SecYEG preprotein conducting channel. SecDF uses the proton motive force (PMF) to complete protein translocation after the ATP-dependent function of SecA. The chain is Protein translocase subunit SecF from Streptomyces coelicolor (strain ATCC BAA-471 / A3(2) / M145).